The following is a 339-amino-acid chain: Ketol-acid reductoisomerase (NADP(+)) (339 aa).

The KARI N-terminal Rossmann domain maps to 1–182 (MRVYYDRDAD…GGGRAGVIET (182 aa)). Residues 24–27 (YGSQ), R48, S51, T53, and 83–86 (DELQ) each bind NADP(+). The active site involves H108. G134 lines the NADP(+) pocket. The region spanning 183–328 (TFKEECETDL…EKLRAMMPWI (146 aa)) is the KARI C-terminal knotted domain. D191, E195, E227, and E231 together coordinate Mg(2+). S252 provides a ligand contact to substrate.

The protein belongs to the ketol-acid reductoisomerase family. Mg(2+) is required as a cofactor.

It catalyses the reaction (2R)-2,3-dihydroxy-3-methylbutanoate + NADP(+) = (2S)-2-acetolactate + NADPH + H(+). The enzyme catalyses (2R,3R)-2,3-dihydroxy-3-methylpentanoate + NADP(+) = (S)-2-ethyl-2-hydroxy-3-oxobutanoate + NADPH + H(+). The protein operates within amino-acid biosynthesis; L-isoleucine biosynthesis; L-isoleucine from 2-oxobutanoate: step 2/4. Its pathway is amino-acid biosynthesis; L-valine biosynthesis; L-valine from pyruvate: step 2/4. Involved in the biosynthesis of branched-chain amino acids (BCAA). Catalyzes an alkyl-migration followed by a ketol-acid reduction of (S)-2-acetolactate (S2AL) to yield (R)-2,3-dihydroxy-isovalerate. In the isomerase reaction, S2AL is rearranged via a Mg-dependent methyl migration to produce 3-hydroxy-3-methyl-2-ketobutyrate (HMKB). In the reductase reaction, this 2-ketoacid undergoes a metal-dependent reduction by NADPH to yield (R)-2,3-dihydroxy-isovalerate. The chain is Ketol-acid reductoisomerase (NADP(+)) from Xanthobacter autotrophicus (strain ATCC BAA-1158 / Py2).